The sequence spans 1073 residues: Carbamoyl phosphate synthase large chain (1073 aa).

The tract at residues Met-1–Glu-403 is carboxyphosphate synthetic domain. ATP is bound by residues Arg-129, Arg-169, Gly-175, Gly-176, Glu-208, Leu-210, Glu-215, Gly-241, Val-242, His-243, Gln-285, and Glu-299. The ATP-grasp 1 domain maps to Asp-133–Ile-328. Residues Gln-285, Glu-299, and Asn-301 each contribute to the Mg(2+) site. 3 residues coordinate Mn(2+): Gln-285, Glu-299, and Asn-301. The oligomerization domain stretch occupies residues Val-404–Ala-553. Residues Asn-554–Ser-935 form a carbamoyl phosphate synthetic domain region. Residues Gln-678–Ala-869 enclose the ATP-grasp 2 domain. ATP contacts are provided by Arg-714, His-753, Leu-755, Glu-760, Gly-785, Val-786, His-787, Ser-788, Gln-828, and Glu-840. The Mg(2+) site is built by Gln-828, Glu-840, and Asn-842. Residues Gln-828, Glu-840, and Asn-842 each coordinate Mn(2+). One can recognise an MGS-like domain in the interval Glu-936–Ala-1073. The tract at residues Glu-936–Ala-1073 is allosteric domain.

The protein belongs to the CarB family. In terms of assembly, composed of two chains; the small (or glutamine) chain promotes the hydrolysis of glutamine to ammonia, which is used by the large (or ammonia) chain to synthesize carbamoyl phosphate. Tetramer of heterodimers (alpha,beta)4. It depends on Mg(2+) as a cofactor. The cofactor is Mn(2+).

It catalyses the reaction hydrogencarbonate + L-glutamine + 2 ATP + H2O = carbamoyl phosphate + L-glutamate + 2 ADP + phosphate + 2 H(+). It carries out the reaction hydrogencarbonate + NH4(+) + 2 ATP = carbamoyl phosphate + 2 ADP + phosphate + 2 H(+). It participates in amino-acid biosynthesis; L-arginine biosynthesis; carbamoyl phosphate from bicarbonate: step 1/1. It functions in the pathway pyrimidine metabolism; UMP biosynthesis via de novo pathway; (S)-dihydroorotate from bicarbonate: step 1/3. Functionally, large subunit of the glutamine-dependent carbamoyl phosphate synthetase (CPSase). CPSase catalyzes the formation of carbamoyl phosphate from the ammonia moiety of glutamine, carbonate, and phosphate donated by ATP, constituting the first step of 2 biosynthetic pathways, one leading to arginine and/or urea and the other to pyrimidine nucleotides. The large subunit (synthetase) binds the substrates ammonia (free or transferred from glutamine from the small subunit), hydrogencarbonate and ATP and carries out an ATP-coupled ligase reaction, activating hydrogencarbonate by forming carboxy phosphate which reacts with ammonia to form carbamoyl phosphate. This Pseudomonas putida (strain ATCC 47054 / DSM 6125 / CFBP 8728 / NCIMB 11950 / KT2440) protein is Carbamoyl phosphate synthase large chain.